The following is a 700-amino-acid chain: Protein no-on-transient A (700 aa).

The interval 1-270 is disordered; sequence MESAGKQDNN…GGGGPRGGED (270 aa). Low complexity-rich tracts occupy residues 9-29 and 54-69; these read NNAT…ANKN and GGPN…NQNG. The segment covering 70 to 79 has biased composition (gly residues); that stretch reads GVTGGGGAVG. Composition is skewed to low complexity over residues 80–89, 96–124, and 144–175; these read GPNQNKNFGN, GNRN…KPNN, and AAAG…VHGQ. Residues 176–208 show a composition bias toward gly residues; sequence GNQGGPGNQGGAGNQGGQGNQGGAGNQGNGQGF. A Phosphoserine modification is found at Ser-236. Positions 253 to 266 are enriched in gly residues; the sequence is MGGGGGGGGGGGPR. 2 consecutive RRM domains span residues 302 to 374 and 376 to 457; these read NRLY…FAPN and TILR…PMEV. Positions 505-616 form a coiled coil; sequence NLFKTKQDAL…AQQLNSLLDQ (112 aa). Residues 568-582 are compositionally biased toward basic and acidic residues; it reads EMRKREEETMRRHQT. Disordered stretches follow at residues 568–591 and 677–700; these read EMRK…MNRQ and MNQG…RRRF. Over residues 682 to 691 the composition is skewed to gly residues; it reads NQRGNNGGGN.

Functionally, required for normal vision and courtship behavior in Drosophila. This Drosophila melanogaster (Fruit fly) protein is Protein no-on-transient A (nonA).